The primary structure comprises 122 residues: Large ribosomal subunit protein uL22 (122 aa).

It belongs to the universal ribosomal protein uL22 family. As to quaternary structure, part of the 50S ribosomal subunit.

This protein binds specifically to 23S rRNA; its binding is stimulated by other ribosomal proteins, e.g. L4, L17, and L20. It is important during the early stages of 50S assembly. It makes multiple contacts with different domains of the 23S rRNA in the assembled 50S subunit and ribosome. Its function is as follows. The globular domain of the protein is located near the polypeptide exit tunnel on the outside of the subunit, while an extended beta-hairpin is found that lines the wall of the exit tunnel in the center of the 70S ribosome. This Prochlorococcus marinus (strain MIT 9303) protein is Large ribosomal subunit protein uL22.